A 90-amino-acid polypeptide reads, in one-letter code: Acylphosphatase (90 aa).

The Acylphosphatase-like domain occupies 4–90 (TVHLRITGHV…KGQYKDFRIY (87 aa)). Residues R19 and N37 contribute to the active site.

This sequence belongs to the acylphosphatase family.

It catalyses the reaction an acyl phosphate + H2O = a carboxylate + phosphate + H(+). The chain is Acylphosphatase (acyP) from Caldanaerobacter subterraneus subsp. tengcongensis (strain DSM 15242 / JCM 11007 / NBRC 100824 / MB4) (Thermoanaerobacter tengcongensis).